We begin with the raw amino-acid sequence, 804 residues long: Phenylalanine--tRNA ligase beta subunit (804 aa).

In terms of domain architecture, tRNA-binding spans 38-148 (RAAFRAFTIA…ENAPVGTSFA (111 aa)). In terms of domain architecture, B5 spans 401–476 (HTARVIDFPV…RIHGINRIDP (76 aa)). Positions 454, 460, 463, and 464 each coordinate Mg(2+). Residues 710–803 (SLFQSLKRDY…VAKQTGGVLR (94 aa)) form the FDX-ACB domain.

The protein belongs to the phenylalanyl-tRNA synthetase beta subunit family. Type 1 subfamily. Tetramer of two alpha and two beta subunits. Mg(2+) is required as a cofactor.

The protein resides in the cytoplasm. It carries out the reaction tRNA(Phe) + L-phenylalanine + ATP = L-phenylalanyl-tRNA(Phe) + AMP + diphosphate + H(+). This chain is Phenylalanine--tRNA ligase beta subunit, found in Brucella suis biovar 1 (strain 1330).